A 434-amino-acid chain; its full sequence is Protein phosphatase 2C 56 (434 aa).

A PPM-type phosphatase domain is found at leucine 128–leucine 422. The Mg(2+) site is built by aspartate 177, aspartate 261, serine 262, aspartate 347, and aspartate 413. The Nuclear localization signal motif lies at lysine 423–lysine 427.

The protein belongs to the PP2C family. Interacts with SPK1, ATHB-6, CIPK15/PKS3, GPX3, SRK2E/OST1, SRK2D, SRK2I, SCAR1, SCAR2, SCAR3 and SCARL. Binds to the PA released by the phospholipase D alpha 1 (PLDALPHA1) in response to ABA during the stomatal closure regulation. Interacts with ABA-bounded PYR1, PYL1, PYL2, PYL3, PYL4, PYL5, PYL6, PYL7, PYL8, PYL9, PYL10, and with free PYL2, PYL3, PYL4 and PYL13. Binds to RPL12B, CPK21 and CPK23. Binds to MAPKKK18. Interacts with KIN10. Interacts with phosphorylated PYL8/RCAR3. Mg(2+) serves as cofactor. The cofactor is Mn(2+). Expressed in seeds and seedlings. In roots, confined to lateral root caps and columella cells.

The protein resides in the nucleus. It is found in the cytoplasm. The protein localises to the cell membrane. It catalyses the reaction O-phospho-L-seryl-[protein] + H2O = L-seryl-[protein] + phosphate. It carries out the reaction O-phospho-L-threonyl-[protein] + H2O = L-threonyl-[protein] + phosphate. Its activity is regulated as follows. Phosphatase activity repressed by oxidized GPX3 and phosphatidic acid (PA). PA is produced by PLD alpha 1 in response to ABA. Repressed by PYR/PYL/RCAR ABA receptors in an ABA-dependent manner. In terms of biological role, key component and repressor of the abscisic acid (ABA) signaling pathway that regulates numerous ABA responses, such as stomatal closure, osmotic water permeability of the plasma membrane (Pos), drought-induced resistance and rhizogenesis, response to glucose, high light stress, seed germination and inhibition of vegetative growth. During the stomatal closure regulation, modulates the inward calcium-channel permeability as well as the actin reorganization in guard cells in response to ABA. Involved in the resistance to the bacterial pathogen Pseudomonas syringae pv. tomato. Controls negatively fibrillin expression that is involved in mediating ABA-induced photoprotection. May be involved in ABA content regulation. Plays a role in the Pro accumulation in response to reduced water availability (low water potential). Required for the ABA negative regulation of the ethylene-induced hyponastic growth. Involved in acquired thermotolerance of root growth and seedling survival. Activates/represses SRK2E/OST1 in response to ABA-dependent stimuli, especially in stomata closure regulation involving SLAC1. Represses MAPKKK18 activity and promotes MAPKKK18 degradation by the proteasome pathway upon abscisic acid (ABA) treatment. Represses KIN10 activity by the specific dephosphorylation of its T-loop Thr-198, leading to a poststress inactivation of SnRK1 signaling. Restricts MAPKKK20 activity by dephosphorylation. The sequence is that of Protein phosphatase 2C 56 from Arabidopsis thaliana (Mouse-ear cress).